Here is a 514-residue protein sequence, read N- to C-terminus: Double-stranded RNA-binding protein 6 (514 aa).

2 DRBM domains span residues 1–70 (MYKN…ALAR) and 87–155 (VYKN…SLRQ). 2 disordered regions span residues 195 to 268 (NNPH…SRFP) and 455 to 496 (EASQ…KDDH). Composition is skewed to polar residues over residues 216-225 (FPQSSHSSYS), 249-263 (AASQ…SPNP), and 473-484 (SPDSLPKTQLKT).

Binds double-stranded RNA. This chain is Double-stranded RNA-binding protein 6 (DRB6), found in Oryza sativa subsp. japonica (Rice).